The sequence spans 349 residues: Glycerol-3-phosphate dehydrogenase [NAD(+)], cytoplasmic (349 aa).

10 to 15 (GSGNWG) contributes to the NAD(+) binding site. Lysine 120 provides a ligand contact to substrate. Alanine 153 provides a ligand contact to NAD(+). Serine 154 is modified (phosphoserine). Lysine 204 acts as the Proton acceptor in catalysis. Arginine 269 contributes to the NAD(+) binding site. 269–270 (RN) contacts substrate. Residue lysine 289 is modified to N6-succinyllysine. NAD(+) contacts are provided by lysine 296 and glutamine 298. Tyrosine 326 is modified (phosphotyrosine).

The protein belongs to the NAD-dependent glycerol-3-phosphate dehydrogenase family. In terms of assembly, homodimer.

Its subcellular location is the cytoplasm. It catalyses the reaction sn-glycerol 3-phosphate + NAD(+) = dihydroxyacetone phosphate + NADH + H(+). Functionally, has glycerol-3-phosphate dehydrogenase activity. The polypeptide is Glycerol-3-phosphate dehydrogenase [NAD(+)], cytoplasmic (GPD1) (Pongo abelii (Sumatran orangutan)).